A 1063-amino-acid chain; its full sequence is Unconventional myosin-Ic (1063 aa).

M1 carries the N-acetylmethionine modification. Position 10 is a phosphoserine (T10). Residues 47-731 (GVQDFVLLEN…TLFATEDSLE (685 aa)) enclose the Myosin motor domain. Residues N88, Y96, 139–148 (SGESGAGKTE), and 192–196 (NDNSS) contribute to the ATP site. K383 carries the N6-methyllysine modification. S408 carries the post-translational modification Phosphoserine. K486 carries the N6-acetyllysine modification. S536 bears the Phosphoserine mark. The interval 608 to 630 (LLQLVEILRSKEPAYIRCIKPND) is actin-binding. IQ domains are found at residues 734 to 757 (RQSLATKIQAAWRGFHWRQKFLRV) and 758 to 786 (KRSAICIQSWWRGTLGRRKAAKRKWAAQT). Phosphoserine is present on residues S864 and S1041. The TH1 domain maps to 885–1059 (KDNYPQSVPR…NGHLAVVAPR (175 aa)).

This sequence belongs to the TRAFAC class myosin-kinesin ATPase superfamily. Myosin family. Interacts (via its IQ motifs) with CABP1 and CIB1; the interaction with CABP1 and CIB1 is calcium-dependent. Interacts (via tail domain) with PLEKHB1 (via PH domain); the interaction is not affected by the presence or absence of calcium and CALM. Interacts with POLR1A. Interacts with POLR2A. Component of the B-WICH complex, at least composed of SMARCA5/SNF2H, BAZ1B/WSTF, SF3B1, DEK, MYO1C, ERCC6, MYBBP1A and DDX21. Interacts (via its IQ motifs) with CALM; this precludes interaction with YWHAB. Interacts with YWHAB; this precludes interaction with CALM. Interacts with RPS6. Interacts with actin. Interacts with LLPH. Interacts with GLUT4. Interacts (via its IQ motifs) with SH3BGRL3; the interaction is dependent on calcium and takes place at membrane ruffles. Isoform 2 contains a N-acetylmethionine at position 1. In terms of tissue distribution, isoform 3 is expressed in small intestine, pancreas, brain, kidney, skin, heart muscle, testis, striated muscle, spleen, liver and lung (at protein level). Expressed in brain, testis, adrenal glands, thymus, spleen, kidney, lung, heart, cochlea and vestibule. Expressed in sensory hair cells of the inner ear. Expressed in adipocytes.

The protein localises to the cytoplasm. The protein resides in the nucleus. It is found in the cell cortex. Its subcellular location is the cell projection. It localises to the stereocilium membrane. The protein localises to the cytoplasmic vesicle. The protein resides in the ruffle membrane. It is found in the nucleolus. Its subcellular location is the nucleoplasm. Functionally, myosins are actin-based motor molecules with ATPase activity. Unconventional myosins serve in intracellular movements. Their highly divergent tails bind to membranous compartments, which then are moved relative to actin filaments. Involved in glucose transporter recycling in response to insulin by regulating movement of intracellular GLUT4-containing vesicles to the plasma membrane. Component of the hair cell's (the sensory cells of the inner ear) adaptation-motor complex. Acts as a mediator of adaptation of mechanoelectrical transduction in stereocilia of vestibular hair cells. Binds phosphoinositides and links the actin cytoskeleton to cellular membranes. Involved in regulation of transcription. Associated with transcriptional active ribosomal genes. Appears to cooperate with the WICH chromatin-remodeling complex to facilitate transcription. Necessary for the formation of the first phosphodiester bond during transcription initiation. This is Unconventional myosin-Ic (Myo1c) from Mus musculus (Mouse).